The sequence spans 223 residues: MASRESGGSRAAALLLVLGVERALALPEICTLCPGGMHNLSRVAAYCEDTSKLMQARCCLNQKGTILGLDLQNCSLKDPGPNFLQAYTAIIIDLQANPLKDDLANTFRGFTQLQTLILPQDVPCPGGSNAWDNVTSFKDKQICQGQRDLCNSTGSPEMCPENGSCASDGPGLLQCVCADGFHGYKCMRQGSFSLLMFFGILGSTTLAISILLWGTQRRKAKAS.

The signal sequence occupies residues 1-25; sequence MASRESGGSRAAALLLVLGVERALA. Over 26–193 the chain is Extracellular; sequence LPEICTLCPG…YKCMRQGSFS (168 aa). The 42-residue stretch at 146-187 folds into the EGF-like domain; it reads QRDLCNSTGSPEMCPENGSCASDGPGLLQCVCADGFHGYKCM. Cystine bridges form between cysteine 150–cysteine 165, cysteine 159–cysteine 175, and cysteine 177–cysteine 186. The helical transmembrane segment at 194–214 threads the bilayer; the sequence is LLMFFGILGSTTLAISILLWG. Residues 215-223 are Cytoplasmic-facing; it reads TQRRKAKAS.

In terms of assembly, interacts with NELL1; the interaction promotes osteoblastic differentiation and mineralization. Interacts with SLC37A3; the interaction is direct and both proteins are mutually dependent for their stability.

It localises to the nucleus envelope. The protein localises to the cell membrane. Its subcellular location is the lysosome membrane. Its function is as follows. Promotes osteoblast cell differentiation and terminal mineralization. Plays a role in inducing the cell cycle arrest via inhibiting CCND1 expression in all-trans-retinoic acid (ATRA) signal pathway. In osteoclasts, forms a transporter complex with ATRAID for nitrogen-containing-bisphophonates (N-BPs) required for releasing N-BP molecules that have trafficked to lysosomes through fluid-phase endocytosis into the cytosol. This is All-trans retinoic acid-induced differentiation factor (Atraid) from Mus musculus (Mouse).